A 266-amino-acid chain; its full sequence is Putative pyruvate, phosphate dikinase regulatory protein (266 aa).

Residue 147-154 coordinates ADP; sequence GLSRTSKT.

It belongs to the pyruvate, phosphate/water dikinase regulatory protein family. PDRP subfamily.

The enzyme catalyses N(tele)-phospho-L-histidyl/L-threonyl-[pyruvate, phosphate dikinase] + ADP = N(tele)-phospho-L-histidyl/O-phospho-L-threonyl-[pyruvate, phosphate dikinase] + AMP + H(+). It catalyses the reaction N(tele)-phospho-L-histidyl/O-phospho-L-threonyl-[pyruvate, phosphate dikinase] + phosphate + H(+) = N(tele)-phospho-L-histidyl/L-threonyl-[pyruvate, phosphate dikinase] + diphosphate. In terms of biological role, bifunctional serine/threonine kinase and phosphorylase involved in the regulation of the pyruvate, phosphate dikinase (PPDK) by catalyzing its phosphorylation/dephosphorylation. In Clostridium perfringens (strain SM101 / Type A), this protein is Putative pyruvate, phosphate dikinase regulatory protein.